The primary structure comprises 531 residues: Squalene epoxidase 1 (531 aa).

The chain crosses the membrane as a helical span at residues 9–29; it reads ILPLLISSLLISFVAFYGFFV. FAD-binding positions include 70-71, 90-91, R98, R169, V185, D347, and M360; these read VA and ER. The next 2 membrane-spanning stretches (helical) occupy residues 458–478 and 483–503; these read LVCH…IPFP and IWLG…IIKA.

This sequence belongs to the squalene monooxygenase family. It depends on FAD as a cofactor. In terms of tissue distribution, expressed in seedlings, leaves, stems, inflorescences, sepals, style and siliques. Expressed in expanded cotyledons, root tips and cortical cells of the root elongation zone, but not in root hair cells. In leaves, expressed in most cells, with a very strong expression in stomata.

Its subcellular location is the membrane. It catalyses the reaction squalene + reduced [NADPH--hemoprotein reductase] + O2 = (S)-2,3-epoxysqualene + oxidized [NADPH--hemoprotein reductase] + H2O + H(+). Its pathway is terpene metabolism; lanosterol biosynthesis; lanosterol from farnesyl diphosphate: step 2/3. Functionally, catalyzes the stereospecific oxidation of squalene to (S)-2,3-epoxysqualene, and is considered to be a rate-limiting enzyme in steroid biosynthesis. Can produce not only oxidosqualene, but also 2,3:22,23-dioxidosqualene. Main squalene epoxidase in the root. Sqe1 mutants may show defects in membrane lipid rafts, impairing the correct localization of RHD2 NADPH oxidase and the proper polarized production of ROS. This Arabidopsis thaliana (Mouse-ear cress) protein is Squalene epoxidase 1 (SQE1).